We begin with the raw amino-acid sequence, 376 residues long: Succinyl-diaminopimelate desuccinylase (376 aa).

His74 contacts Zn(2+). Asp76 is a catalytic residue. Residue Asp105 participates in Zn(2+) binding. Glu135 acts as the Proton acceptor in catalysis. Glu136, Glu164, and His349 together coordinate Zn(2+).

This sequence belongs to the peptidase M20A family. DapE subfamily. As to quaternary structure, homodimer. It depends on Zn(2+) as a cofactor. Co(2+) serves as cofactor.

It carries out the reaction N-succinyl-(2S,6S)-2,6-diaminopimelate + H2O = (2S,6S)-2,6-diaminopimelate + succinate. Its pathway is amino-acid biosynthesis; L-lysine biosynthesis via DAP pathway; LL-2,6-diaminopimelate from (S)-tetrahydrodipicolinate (succinylase route): step 3/3. Its function is as follows. Catalyzes the hydrolysis of N-succinyl-L,L-diaminopimelic acid (SDAP), forming succinate and LL-2,6-diaminopimelate (DAP), an intermediate involved in the bacterial biosynthesis of lysine and meso-diaminopimelic acid, an essential component of bacterial cell walls. In Zymomonas mobilis subsp. mobilis (strain ATCC 31821 / ZM4 / CP4), this protein is Succinyl-diaminopimelate desuccinylase.